We begin with the raw amino-acid sequence, 428 residues long: Adenylosuccinate synthetase (428 aa).

GTP is bound by residues 12 to 18 and 40 to 42; these read GDEGKGK and GHT. The active-site Proton acceptor is Asp-13. Positions 13 and 40 each coordinate Mg(2+). Residues 13–16, 38–41, Thr-130, Arg-144, Gln-225, Thr-240, and Arg-304 each bind IMP; these read DEGK and NAGH. His-41 functions as the Proton donor in the catalytic mechanism. 300-306 is a substrate binding site; it reads VTTGRSR. Residues Arg-306, 332-334, and 414-416 each bind GTP; these read KID and GVG.

Belongs to the adenylosuccinate synthetase family. Homodimer. It depends on Mg(2+) as a cofactor.

It localises to the cytoplasm. It catalyses the reaction IMP + L-aspartate + GTP = N(6)-(1,2-dicarboxyethyl)-AMP + GDP + phosphate + 2 H(+). It functions in the pathway purine metabolism; AMP biosynthesis via de novo pathway; AMP from IMP: step 1/2. Functionally, plays an important role in the de novo pathway of purine nucleotide biosynthesis. Catalyzes the first committed step in the biosynthesis of AMP from IMP. The protein is Adenylosuccinate synthetase of Clostridium botulinum (strain Alaska E43 / Type E3).